The primary structure comprises 83 residues: Small ribosomal subunit protein bS18A (83 aa).

The protein belongs to the bacterial ribosomal protein bS18 family. In terms of assembly, part of the 30S ribosomal subunit. Forms a tight heterodimer with protein bS6.

Functionally, binds as a heterodimer with protein bS6 to the central domain of the 16S rRNA, where it helps stabilize the platform of the 30S subunit. This is Small ribosomal subunit protein bS18A from Nocardia farcinica (strain IFM 10152).